Here is a 260-residue protein sequence, read N- to C-terminus: Snake venom serine protease homolog KN7 (260 aa).

An N-terminal signal peptide occupies residues 1–18; sequence MVLIRVLANLLILQLSYA. A propeptide spanning residues 19–24 is cleaved from the precursor; the sequence is QKSSEL. A Peptidase S1 domain is found at 25 to 251; it reads IIGGDECNIN…HLDWIKSIIA (227 aa). Intrachain disulfides connect C31-C165, C52-C68, C100-C258, C144-C212, C176-C191, and C202-C227. N-linked (GlcNAc...) asparagine glycans are attached at residues N83, N123, and N124.

This sequence belongs to the peptidase S1 family. Snake venom subfamily. As to expression, expressed by the venom gland.

The protein resides in the secreted. In terms of biological role, snake venom serine protease homolog that may act in the hemostasis system of the prey. This Trimeresurus stejnegeri (Chinese green tree viper) protein is Snake venom serine protease homolog KN7.